The chain runs to 318 residues: Phosphate acetyltransferase (318 aa).

Belongs to the phosphate acetyltransferase and butyryltransferase family.

The protein localises to the cytoplasm. The enzyme catalyses acetyl-CoA + phosphate = acetyl phosphate + CoA. The protein operates within metabolic intermediate biosynthesis; acetyl-CoA biosynthesis; acetyl-CoA from acetate: step 2/2. The protein is Phosphate acetyltransferase (pta) of Paracoccus denitrificans.